Reading from the N-terminus, the 247-residue chain is Pleckstrin homology domain-containing family F member 2 (247 aa).

The region spanning 35-131 (VLIGEGVLTK…WMSHINKCVS (97 aa)) is the PH domain. The FYVE-type zinc-finger motif lies at 152–212 (DSEATVCMRC…VCEFCYKQLS (61 aa)). Zn(2+) contacts are provided by cysteine 158, cysteine 161, cysteine 175, cysteine 178, cysteine 183, cysteine 186, cysteine 204, and cysteine 207. Residues 213–247 (TGATLPPRSDSYSRQGSDFGSNNISDDDDDDDSSD) are disordered. The span at 222–236 (DSYSRQGSDFGSNNI) shows a compositional bias: polar residues. The segment covering 237-247 (SDDDDDDDSSD) has biased composition (acidic residues).

The protein localises to the early endosome membrane. It localises to the endoplasmic reticulum. May play a role in early endosome fusion upstream of RAB5, hence regulating receptor trafficking and fluid-phase transport. Enhances cellular sensitivity to TNF-induced apoptosis. This is Pleckstrin homology domain-containing family F member 2 (plekhf2) from Danio rerio (Zebrafish).